A 439-amino-acid chain; its full sequence is Phosphomethylpyrimidine synthase (439 aa).

Residues asparagine 67, methionine 96, tyrosine 126, histidine 165, 187 to 189 (SRG), 228 to 231 (DSLR), and glutamate 267 contribute to the substrate site. Histidine 271 lines the Zn(2+) pocket. Tyrosine 294 provides a ligand contact to substrate. Zn(2+) is bound at residue histidine 335. Positions 411, 414, and 418 each coordinate [4Fe-4S] cluster.

It belongs to the ThiC family. Requires [4Fe-4S] cluster as cofactor.

The catalysed reaction is 5-amino-1-(5-phospho-beta-D-ribosyl)imidazole + S-adenosyl-L-methionine = 4-amino-2-methyl-5-(phosphooxymethyl)pyrimidine + CO + 5'-deoxyadenosine + formate + L-methionine + 3 H(+). It participates in cofactor biosynthesis; thiamine diphosphate biosynthesis. Functionally, catalyzes the synthesis of the hydroxymethylpyrimidine phosphate (HMP-P) moiety of thiamine from aminoimidazole ribotide (AIR) in a radical S-adenosyl-L-methionine (SAM)-dependent reaction. The protein is Phosphomethylpyrimidine synthase of Ignicoccus hospitalis (strain KIN4/I / DSM 18386 / JCM 14125).